A 132-amino-acid chain; its full sequence is ATP synthase epsilon chain (132 aa).

It belongs to the ATPase epsilon chain family. As to quaternary structure, F-type ATPases have 2 components, CF(1) - the catalytic core - and CF(0) - the membrane proton channel. CF(1) has five subunits: alpha(3), beta(3), gamma(1), delta(1), epsilon(1). CF(0) has three main subunits: a, b and c.

The protein resides in the cell membrane. Produces ATP from ADP in the presence of a proton gradient across the membrane. This is ATP synthase epsilon chain from Brevibacillus brevis (strain 47 / JCM 6285 / NBRC 100599).